Here is a 581-residue protein sequence, read N- to C-terminus: ATP-dependent lipid A-core flippase (581 aa).

The next 5 membrane-spanning stretches (helical) occupy residues 27-47 (VFLAVIGMVGTAATEPVFPAI), 63-83 (MVWLIPMGIVTLFLVRSVIVY), 154-174 (IALIGYLLYLDWKLTLITLAI), 251-271 (MTPITHIAASVAVAIIAFLAL), and 279-299 (GASAGSFISFITAMLMLISPV). One can recognise an ABC transmembrane type-1 domain in the interval 28-311 (FLAVIGMVGT…LATVNPTIQR (284 aa)). An ABC transporter domain is found at 343-579 (ICFDNVSLRY…GSYYANLSRL (237 aa)). An ATP-binding site is contributed by 377-384 (GASGGGKS).

The protein belongs to the ABC transporter superfamily. Lipid exporter (TC 3.A.1.106) family. As to quaternary structure, homodimer.

Its subcellular location is the cell inner membrane. It catalyses the reaction ATP + H2O + lipid A-core oligosaccharideSide 1 = ADP + phosphate + lipid A-core oligosaccharideSide 2.. In terms of biological role, involved in lipopolysaccharide (LPS) biosynthesis. Translocates lipid A-core from the inner to the outer leaflet of the inner membrane. Transmembrane domains (TMD) form a pore in the inner membrane and the ATP-binding domain (NBD) is responsible for energy generation. This is ATP-dependent lipid A-core flippase from Albidiferax ferrireducens (strain ATCC BAA-621 / DSM 15236 / T118) (Rhodoferax ferrireducens).